Here is a 67-residue protein sequence, read N- to C-terminus: Protein C' (67 aa).

Belongs to the rhabdoviruses C protein family.

Seems to stimulates transcription by the viral polymerase. May play a role in viral pathogenesis or transmission by insects vectors. The chain is Protein C' (P) from Vesicular stomatitis Indiana virus (strain 98COE North America) (VSIV).